We begin with the raw amino-acid sequence, 202 residues long: Imidazoleglycerol-phosphate dehydratase (202 aa).

Belongs to the imidazoleglycerol-phosphate dehydratase family.

It is found in the cytoplasm. The enzyme catalyses D-erythro-1-(imidazol-4-yl)glycerol 3-phosphate = 3-(imidazol-4-yl)-2-oxopropyl phosphate + H2O. It participates in amino-acid biosynthesis; L-histidine biosynthesis; L-histidine from 5-phospho-alpha-D-ribose 1-diphosphate: step 6/9. The sequence is that of Imidazoleglycerol-phosphate dehydratase from Nocardioides sp. (strain ATCC BAA-499 / JS614).